We begin with the raw amino-acid sequence, 150 residues long: 3-dehydroquinate dehydratase (150 aa).

Tyrosine 26 (proton acceptor) is an active-site residue. Asparagine 77, histidine 83, and aspartate 90 together coordinate substrate. The active-site Proton donor is histidine 103. Substrate contacts are provided by residues 104–105 and arginine 114; that span reads LS.

Belongs to the type-II 3-dehydroquinase family. As to quaternary structure, homododecamer.

The enzyme catalyses 3-dehydroquinate = 3-dehydroshikimate + H2O. It participates in metabolic intermediate biosynthesis; chorismate biosynthesis; chorismate from D-erythrose 4-phosphate and phosphoenolpyruvate: step 3/7. Catalyzes a trans-dehydration via an enolate intermediate. This chain is 3-dehydroquinate dehydratase, found in Pectobacterium atrosepticum (strain SCRI 1043 / ATCC BAA-672) (Erwinia carotovora subsp. atroseptica).